Here is a 498-residue protein sequence, read N- to C-terminus: ATP synthase subunit beta, chloroplastic (498 aa).

172 to 179 (GGAGVGKT) provides a ligand contact to ATP.

Belongs to the ATPase alpha/beta chains family. In terms of assembly, F-type ATPases have 2 components, CF(1) - the catalytic core - and CF(0) - the membrane proton channel. CF(1) has five subunits: alpha(3), beta(3), gamma(1), delta(1), epsilon(1). CF(0) has four main subunits: a(1), b(1), b'(1) and c(9-12).

It localises to the plastid. The protein resides in the chloroplast thylakoid membrane. The enzyme catalyses ATP + H2O + 4 H(+)(in) = ADP + phosphate + 5 H(+)(out). Functionally, produces ATP from ADP in the presence of a proton gradient across the membrane. The catalytic sites are hosted primarily by the beta subunits. This is ATP synthase subunit beta, chloroplastic from Calamus usitatus (Palm tree).